Here is a 114-residue protein sequence, read N- to C-terminus: Small ribosomal subunit protein bS6 (114 aa).

The protein belongs to the bacterial ribosomal protein bS6 family.

Its function is as follows. Binds together with bS18 to 16S ribosomal RNA. This Protochlamydia amoebophila (strain UWE25) protein is Small ribosomal subunit protein bS6.